The primary structure comprises 305 residues: Glutaminase 2 (305 aa).

Substrate contacts are provided by Ser61, Asn113, Glu158, Asn165, Tyr189, Tyr241, and Val259.

The protein belongs to the glutaminase family. Homotetramer.

It carries out the reaction L-glutamine + H2O = L-glutamate + NH4(+). The protein is Glutaminase 2 of Clostridium perfringens (strain 13 / Type A).